The sequence spans 436 residues: Enolase (436 aa).

2 residues coordinate substrate: His159 and Glu168. The active-site Proton donor is the Glu211. Mg(2+) contacts are provided by Asp246, Glu295, and Asp320. The substrate site is built by Glu295 and Asp320. Catalysis depends on Lys345, which acts as the Proton acceptor. Substrate-binding positions include 372–375 and Lys396; that span reads SHRS.

Belongs to the enolase family. Homodimer. Requires Mg(2+) as cofactor.

The protein resides in the cytoplasm. The enzyme catalyses (2R)-2-phosphoglycerate = phosphoenolpyruvate + H2O. Its pathway is carbohydrate degradation; glycolysis; pyruvate from D-glyceraldehyde 3-phosphate: step 4/5. This Cunninghamella elegans protein is Enolase.